The primary structure comprises 260 residues: Small ribosomal subunit protein uS2 (260 aa).

Basic and acidic residues predominate over residues 228–240 (RKETKAENAEEAM). The disordered stretch occupies residues 228-260 (RKETKAENAEEAMKQAAEAEAEAAAPAAEESAE). The segment covering 241 to 260 (KQAAEAEAEAAAPAAEESAE) has biased composition (low complexity).

It belongs to the universal ribosomal protein uS2 family.

In Oleidesulfovibrio alaskensis (strain ATCC BAA-1058 / DSM 17464 / G20) (Desulfovibrio alaskensis), this protein is Small ribosomal subunit protein uS2.